Reading from the N-terminus, the 360-residue chain is Ribosomal RNA large subunit methyltransferase F (360 aa).

A disordered region spans residues methionine 1–leucine 38. Positions arginine 10–proline 20 are enriched in basic residues.

It belongs to the methyltransferase superfamily. METTL16/RlmF family.

The protein resides in the cytoplasm. The enzyme catalyses adenosine(1618) in 23S rRNA + S-adenosyl-L-methionine = N(6)-methyladenosine(1618) in 23S rRNA + S-adenosyl-L-homocysteine + H(+). In terms of biological role, specifically methylates the adenine in position 1618 of 23S rRNA. This chain is Ribosomal RNA large subunit methyltransferase F, found in Shewanella frigidimarina (strain NCIMB 400).